The sequence spans 126 residues: Glycerol dehydrogenase small subunit (126 aa).

4 helical membrane passes run 13–33 (WLTL…VIGG), 41–61 (GSTY…FMLM), 67–87 (AFLY…EVGF), and 92–112 (LLPR…TIPV).

Its subcellular location is the cell membrane. The enzyme catalyses glycerol + A = dihydroxyacetone + AH2. Functionally, catalyzes the oxidation of glycerol to glycerone. Also acts, more slowly, on a number of other polyols including D-sorbitol, D-arabinitol, D-mannitol, meso-erythritol, adonitol and propylene glycol. This Gluconobacter thailandicus protein is Glycerol dehydrogenase small subunit (sldB).